The following is a 215-amino-acid chain: N-(5'-phosphoribosyl)anthranilate isomerase (215 aa).

The protein belongs to the TrpF family.

It catalyses the reaction N-(5-phospho-beta-D-ribosyl)anthranilate = 1-(2-carboxyphenylamino)-1-deoxy-D-ribulose 5-phosphate. Its pathway is amino-acid biosynthesis; L-tryptophan biosynthesis; L-tryptophan from chorismate: step 3/5. This Chlorobium phaeobacteroides (strain DSM 266 / SMG 266 / 2430) protein is N-(5'-phosphoribosyl)anthranilate isomerase.